The following is a 158-amino-acid chain: MSSAIERKSLDPSEEPVDEVLQMPPSLLTCGGCQQNIGDRYFLKAIDQYWHEDCLSCDLCGCRLGEVGRRLYYKLGRKLCRRDYLRLFGQDGLCASCDKRIRAYEMTMRVKDKVYHLECFKCAACQKHFCVGDRYLLINSDIVCEQDIYEWTKINGMI.

LIM zinc-binding domains lie at 30-89 (CGGC…RLFG) and 94-153 (CASC…EWTK).

Interacts via its LIM domains with ELF2 and LDB1. Interacts with BEX2 and KDM5A. Also interacts with basic helix-loop-helix protein TAL1/SCL and can assemble in a complex with LMO2 and TAL1/SCL.

It is found in the nucleus. Functionally, acts with TAL1/SCL to regulate red blood cell development. Also acts with LDB1 to maintain erythroid precursors in an immature state. This is Rhombotin-2 (LMO2) from Bos taurus (Bovine).